Consider the following 117-residue polypeptide: Modulator protein MzrA (117 aa).

Topologically, residues 1–11 (MMTNRRFRKPS) are cytoplasmic. A helical membrane pass occupies residues 12-29 (AWRLLLLLLPLVVLLSMS). The Periplasmic portion of the chain corresponds to 30–117 (SRRLPDEVML…SNGTSPVTRS (88 aa)).

This sequence belongs to the MzrA family. Interacts with EnvZ.

Its subcellular location is the cell inner membrane. Its function is as follows. Modulates the activity of the EnvZ/OmpR two-component regulatory system, probably by directly modulating EnvZ enzymatic activity and increasing stability of phosphorylated OmpR. The polypeptide is Modulator protein MzrA (Dickeya dadantii (strain 3937) (Erwinia chrysanthemi (strain 3937))).